The following is a 254-amino-acid chain: Tyrosine-protein phosphatase YwqE (254 aa).

This sequence belongs to the metallo-dependent hydrolases superfamily. CpsB/CapC family. Mn(2+) is required as a cofactor.

The enzyme catalyses O-phospho-L-tyrosyl-[protein] + H2O = L-tyrosyl-[protein] + phosphate. Inhibited by vanadate and sodium pyrophosphate. Not inhibited by sodium fluoride. In terms of biological role, dephosphorylates the phosphotyrosine-containing proteins YwqD, YwqF and Ssb. The chain is Tyrosine-protein phosphatase YwqE (ywqE) from Bacillus subtilis (strain 168).